We begin with the raw amino-acid sequence, 575 residues long: Probable methionine--tRNA ligase, mitochondrial (575 aa).

The short motif at 52–62 (FYVNGPPHIGH) is the 'HIGH' region element. The short motif at 352 to 356 (KMSKS) is the 'KMSKS' region element. Residue Lys355 coordinates ATP.

The protein belongs to the class-I aminoacyl-tRNA synthetase family.

It is found in the mitochondrion matrix. It carries out the reaction tRNA(Met) + L-methionine + ATP = L-methionyl-tRNA(Met) + AMP + diphosphate. The chain is Probable methionine--tRNA ligase, mitochondrial (mmetS) from Dictyostelium discoideum (Social amoeba).